Reading from the N-terminus, the 494-residue chain is O-acetyltransferase ptmV (494 aa).

Positions 181–203 (ESQQDSREKLRHSGGPPDPRFDH) are disordered.

Belongs to the fumigaclavine B O-acetyltransferase family. In terms of assembly, monomer.

It functions in the pathway secondary metabolite biosynthesis. O-acetyltransferase; part of the gene cluster that mediates the biosynthesis of the indole diterpenes penitrems. The geranylgeranyl diphosphate (GGPP) synthase ptmG catalyzes the first step in penitrem biosynthesis via conversion of farnesyl pyrophosphate and isopentyl pyrophosphate into geranylgeranyl pyrophosphate (GGPP). Condensation of indole-3-glycerol phosphate with GGPP by the prenyl transferase ptmC then forms 3-geranylgeranylindole (3-GGI). Epoxidation by the FAD-dependent monooxygenase ptmM leads to a epoxidized-GGI that is substrate of the terpene cyclase ptmB for cyclization to yield paspaline. Paspaline is subsequently converted to 13-desoxypaxilline by the cytochrome P450 monooxygenase ptmP, the latter being then converted to paxilline by the cytochrome P450 monooxygenase ptmQ. Paxilline is converted to beta-paxitriol via C-10 ketoreduction by the short-chain dehydrogenase ptmH which can be monoprenylated at the C-20 by the indole diterpene prenyltransferase ptmD. A two-step elimination (acetylation and elimination) process performed by the O-acetyltransferase ptmV and ptmI leads to the production of the prenylated form of penijanthine. The FAD-linked oxidoreductase ptmO then converts the prenylated form of penijanthine into PC-M5 which is in turn transformed into PC-M4 by the aromatic dimethylallyltransferase ptmE. Five sequential oxidative transformations performed by the cytochrome P450 monooxygenases ptmK, ptmU, ptmL, ptmN and ptmJ yield the various penitrem compounds. PtmK, ptmU and ptmM are involved in the formation of the key bicyclic ring of penitrem C via the formation of the intermediates secopenitrem D and penitrem D. PtmL catalyzes the epoxidation of penitrem D and C to yield penitrem B and F, respectively. PtmJ catalyzes the last benzylic hydroxylation to convert penitrem B to prenitrem E and penitrem F to penitrem A. The polypeptide is O-acetyltransferase ptmV (Penicillium ochrochloron).